We begin with the raw amino-acid sequence, 183 residues long: Ribosome-recycling factor (183 aa).

The protein belongs to the RRF family.

It localises to the cytoplasm. Its function is as follows. Responsible for the release of ribosomes from messenger RNA at the termination of protein biosynthesis. May increase the efficiency of translation by recycling ribosomes from one round of translation to another. This is Ribosome-recycling factor from Ureaplasma urealyticum serovar 10 (strain ATCC 33699 / Western).